The following is a 436-amino-acid chain: 3-ketoacyl-CoA thiolase (436 aa).

The active-site Acyl-thioester intermediate is Cys-99. Residues His-392 and Cys-422 each act as proton acceptor in the active site.

Belongs to the thiolase-like superfamily. Thiolase family. Heterotetramer of two alpha chains (FadJ) and two beta chains (FadI).

The protein localises to the cytoplasm. The enzyme catalyses an acyl-CoA + acetyl-CoA = a 3-oxoacyl-CoA + CoA. Its pathway is lipid metabolism; fatty acid beta-oxidation. Its function is as follows. Catalyzes the final step of fatty acid oxidation in which acetyl-CoA is released and the CoA ester of a fatty acid two carbons shorter is formed. This is 3-ketoacyl-CoA thiolase from Escherichia coli (strain ATCC 8739 / DSM 1576 / NBRC 3972 / NCIMB 8545 / WDCM 00012 / Crooks).